Reading from the N-terminus, the 358-residue chain is Methylthioribose-1-phosphate isomerase (358 aa).

Residues 54–56, R96, and Q205 each bind substrate; that span reads RGA. The Proton donor role is filled by D246. 256-257 contributes to the substrate binding site; sequence NK.

Belongs to the eIF-2B alpha/beta/delta subunits family. MtnA subfamily.

The enzyme catalyses 5-(methylsulfanyl)-alpha-D-ribose 1-phosphate = 5-(methylsulfanyl)-D-ribulose 1-phosphate. It participates in amino-acid biosynthesis; L-methionine biosynthesis via salvage pathway; L-methionine from S-methyl-5-thio-alpha-D-ribose 1-phosphate: step 1/6. In terms of biological role, catalyzes the interconversion of methylthioribose-1-phosphate (MTR-1-P) into methylthioribulose-1-phosphate (MTRu-1-P). The protein is Methylthioribose-1-phosphate isomerase of Pseudomonas fluorescens (strain Pf0-1).